We begin with the raw amino-acid sequence, 412 residues long: Multifunctional CCA protein (412 aa).

Residues G8 and R11 each coordinate ATP. Residues G8 and R11 each contribute to the CTP site. Positions 21 and 23 each coordinate Mg(2+). ATP is bound by residues R91, R137, and R140. Positions 91, 137, and 140 each coordinate CTP. Residues 225 to 326 form the HD domain; sequence TGIHVMMVID…ADMLQATDAY (102 aa).

This sequence belongs to the tRNA nucleotidyltransferase/poly(A) polymerase family. Bacterial CCA-adding enzyme type 1 subfamily. Monomer. Can also form homodimers and oligomers. Requires Mg(2+) as cofactor. The cofactor is Ni(2+).

It carries out the reaction a tRNA precursor + 2 CTP + ATP = a tRNA with a 3' CCA end + 3 diphosphate. It catalyses the reaction a tRNA with a 3' CCA end + 2 CTP + ATP = a tRNA with a 3' CCACCA end + 3 diphosphate. Its function is as follows. Catalyzes the addition and repair of the essential 3'-terminal CCA sequence in tRNAs without using a nucleic acid template. Adds these three nucleotides in the order of C, C, and A to the tRNA nucleotide-73, using CTP and ATP as substrates and producing inorganic pyrophosphate. tRNA 3'-terminal CCA addition is required both for tRNA processing and repair. Also involved in tRNA surveillance by mediating tandem CCA addition to generate a CCACCA at the 3' terminus of unstable tRNAs. While stable tRNAs receive only 3'-terminal CCA, unstable tRNAs are marked with CCACCA and rapidly degraded. This Nitrosomonas europaea (strain ATCC 19718 / CIP 103999 / KCTC 2705 / NBRC 14298) protein is Multifunctional CCA protein.